The chain runs to 396 residues: Tryptophan synthase beta chain (396 aa).

Lysine 88 is subject to N6-(pyridoxal phosphate)lysine.

The protein belongs to the TrpB family. In terms of assembly, tetramer of two alpha and two beta chains. It depends on pyridoxal 5'-phosphate as a cofactor.

The catalysed reaction is (1S,2R)-1-C-(indol-3-yl)glycerol 3-phosphate + L-serine = D-glyceraldehyde 3-phosphate + L-tryptophan + H2O. Its pathway is amino-acid biosynthesis; L-tryptophan biosynthesis; L-tryptophan from chorismate: step 5/5. The beta subunit is responsible for the synthesis of L-tryptophan from indole and L-serine. The chain is Tryptophan synthase beta chain from Shewanella baltica (strain OS185).